We begin with the raw amino-acid sequence, 572 residues long: Proline--tRNA ligase (572 aa).

The protein belongs to the class-II aminoacyl-tRNA synthetase family. ProS type 1 subfamily. In terms of assembly, homodimer.

It is found in the cytoplasm. The enzyme catalyses tRNA(Pro) + L-proline + ATP = L-prolyl-tRNA(Pro) + AMP + diphosphate. Catalyzes the attachment of proline to tRNA(Pro) in a two-step reaction: proline is first activated by ATP to form Pro-AMP and then transferred to the acceptor end of tRNA(Pro). As ProRS can inadvertently accommodate and process non-cognate amino acids such as alanine and cysteine, to avoid such errors it has two additional distinct editing activities against alanine. One activity is designated as 'pretransfer' editing and involves the tRNA(Pro)-independent hydrolysis of activated Ala-AMP. The other activity is designated 'posttransfer' editing and involves deacylation of mischarged Ala-tRNA(Pro). The misacylated Cys-tRNA(Pro) is not edited by ProRS. The polypeptide is Proline--tRNA ligase (Salmonella choleraesuis (strain SC-B67)).